The chain runs to 107 residues: Ribonuclease P protein component 4 (107 aa).

Residues Cys66, Cys69, Cys92, and Cys95 each coordinate Zn(2+).

Belongs to the eukaryotic/archaeal RNase P protein component 4 family. As to quaternary structure, consists of a catalytic RNA component and at least 4-5 protein subunits. It depends on Zn(2+) as a cofactor.

It localises to the cytoplasm. It catalyses the reaction Endonucleolytic cleavage of RNA, removing 5'-extranucleotides from tRNA precursor.. Functionally, part of ribonuclease P, a protein complex that generates mature tRNA molecules by cleaving their 5'-ends. The chain is Ribonuclease P protein component 4 from Methanosarcina mazei (strain ATCC BAA-159 / DSM 3647 / Goe1 / Go1 / JCM 11833 / OCM 88) (Methanosarcina frisia).